The sequence spans 498 residues: 3-octaprenyl-4-hydroxybenzoate carboxy-lyase (498 aa).

Asparagine 175 is a Mn(2+) binding site. Residues 178–180 (IYR), 192–194 (RWL), and 197–198 (RG) each bind prenylated FMN. A Mn(2+)-binding site is contributed by glutamate 241. The active-site Proton donor is aspartate 290.

The protein belongs to the UbiD family. Homohexamer. Requires prenylated FMN as cofactor. It depends on Mn(2+) as a cofactor.

The protein resides in the cell membrane. It carries out the reaction a 4-hydroxy-3-(all-trans-polyprenyl)benzoate + H(+) = a 2-(all-trans-polyprenyl)phenol + CO2. It participates in cofactor biosynthesis; ubiquinone biosynthesis. Functionally, catalyzes the decarboxylation of 3-octaprenyl-4-hydroxy benzoate to 2-octaprenylphenol, an intermediate step in ubiquinone biosynthesis. The sequence is that of 3-octaprenyl-4-hydroxybenzoate carboxy-lyase from Yersinia pestis bv. Antiqua (strain Antiqua).